The following is a 440-amino-acid chain: Microtubule-associated tumor suppressor 1 homolog (440 aa).

The stretch at 106-401 (IQHLLSEREE…RLSMENEELL (296 aa)) forms a coiled coil. Residues Ser373, Ser394, Ser415, Ser425, Ser429, Ser431, Ser433, Ser434, and Ser438 each carry the phosphoserine modification. Positions 407–440 (GDLCSPKRSPTSSAIPFQSPRNSGSFSSPSISPR) are disordered. Positions 425–440 (SPRNSGSFSSPSISPR) are enriched in low complexity.

It belongs to the MTUS1 family. In terms of assembly, homodimer. Interacts with AGTR2. Interacts with PTPN6. As to expression, present in neurons (at protein level).

It localises to the mitochondrion. It is found in the golgi apparatus. The protein resides in the cell membrane. The protein localises to the nucleus. Its function is as follows. Cooperates with AGTR2 to inhibit ERK2 activation and cell proliferation. May be required for AGTR2 cell surface expression. Together with PTPN6, induces UBE2V2 expression upon angiotensin-II stimulation. This Rattus norvegicus (Rat) protein is Microtubule-associated tumor suppressor 1 homolog (Mtus1).